Here is a 570-residue protein sequence, read N- to C-terminus: FERM domain-containing protein 5 (570 aa).

The FERM domain maps to 17–298 (YSCTVRLLDD…ENQAFYKLEK (282 aa)). The tract at residues 308 to 353 (SNLFFKGSRFRYSGRVAKEVMESSAKIKREPPEIHRAGMVPSRSCP) is interaction with ROCK1. A disordered region spans residues 344–367 (AGMVPSRSCPSITHGPRLSSVPRT). At S375 the chain carries Phosphoserine. A disordered region spans residues 385 to 407 (DSAHSTPVRSTSHGDTFLPHVRS). Residues 388 to 398 (HSTPVRSTSHG) are compositionally biased toward polar residues. The chain crosses the membrane as a helical span at residues 504-524 (LLLVTMGLLFVLLLLLIILTE).

Interacts with CTNND1. Interacts with ITGB5 (via cytoplasmic domain) and ROCK1.

It localises to the membrane. The protein resides in the cell junction. The protein localises to the adherens junction. Functionally, may be involved in regulation of cell migration. May regulate cell-matrix interactions via its interaction with ITGB5 and modifying ITGB5 cytoplasmic tail interactions such as with FERMT2 and TLN1. May regulate ROCK1 kinase activity possibly involved in regulation of actin stress fiber formation. The protein is FERM domain-containing protein 5 (FRMD5) of Homo sapiens (Human).